Here is a 227-residue protein sequence, read N- to C-terminus: MGQLGALLHLVDPTLPIGGFNHSNGLETFVQQGKVNSRASLEEYVQTQLMQNWIYNDGAYLSLAFDAMANHDLDRLLALDQELAASKIARESREGSYKLGVRLLKIFIRYENHPLLSEFQQAVSEKRCQGYFPIVFAMVAQAMNLDKAETLYAFYYNAAVGVVTNGVKLVPLSQMDGQDILFALRTPLAQAVENSLNPDLDWLGAATLASDIRSMQHEQLYTRLYMS.

The protein belongs to the UreF family. UreD, UreF and UreG form a complex that acts as a GTP-hydrolysis-dependent molecular chaperone, activating the urease apoprotein by helping to assemble the nickel containing metallocenter of UreC. The UreE protein probably delivers the nickel.

It is found in the cytoplasm. Its function is as follows. Required for maturation of urease via the functional incorporation of the urease nickel metallocenter. The polypeptide is Urease accessory protein UreF (Actinobacillus pleuropneumoniae (Haemophilus pleuropneumoniae)).